The following is a 407-amino-acid chain: Argininosuccinate synthase (407 aa).

Residues 12 to 20 (AFSGGLDTS) and alanine 39 contribute to the ATP site. Residues tyrosine 90 and serine 95 each coordinate L-citrulline. Glycine 120 is a binding site for ATP. 3 residues coordinate L-aspartate: threonine 122, asparagine 126, and aspartate 127. Asparagine 126 contacts L-citrulline. L-citrulline-binding residues include arginine 130, serine 181, serine 190, glutamate 266, and tyrosine 278.

Belongs to the argininosuccinate synthase family. Type 1 subfamily. Homotetramer.

It is found in the cytoplasm. The catalysed reaction is L-citrulline + L-aspartate + ATP = 2-(N(omega)-L-arginino)succinate + AMP + diphosphate + H(+). The protein operates within amino-acid biosynthesis; L-arginine biosynthesis; L-arginine from L-ornithine and carbamoyl phosphate: step 2/3. In Nitrosospira multiformis (strain ATCC 25196 / NCIMB 11849 / C 71), this protein is Argininosuccinate synthase.